Consider the following 313-residue polypeptide: Proline-rich protein 3 (313 aa).

The first 22 residues, 1 to 22 (MAITRSSLAICLILSLVTITTA), serve as a signal peptide directing secretion. Residues 27 to 312 (PSSPPVYKSP…GPKAAPATPK (286 aa)) are 35 X 5 AA approximate repeats. Tandem repeats lie at residues 30–34 (PPVYK), 35–39 (SPEHK), 40–43 (PTLP), 44–48 (SPVYT), 49–53 (PPVYK), 54–57 (PTLS), 58–62 (PPVYT), 64–67 (PTIP), 68–72 (PPVYT), 73–77 (PPVYK), 82–86 (PPVYT), 87–91 (KPTIP), 92–96 (PPVYT), 97–101 (PPVYK), 102–105 (PTLS), 106–110 (PPVYT), 111–115 (KPTIP), 116–120 (PPVYT), 121–125 (PPVYK), 126–131 (PTPVYT), 132–136 (KPTIP), 137–141 (PPVYT), 142–146 (PPVYK), 147–150 (PTPS), 151–155 (PPVYK), 157–163 (SPSYSSP), 164–168 (PPPYV), 169–174 (PKPTYT), 175–181 (PTTKPYV), 182–186 (PEILK), 187–229 (AVDG…VIYS), 258–262 (SPVET), 266–270 (PTNVN), 298–302 (PFYYT), and 308–312 (PATPK).

It belongs to the plant proline-rich protein superfamily. ENOD12 family. Exclusively expressed in roots, particularly in root hairs-containing regions, and especially in root hairs.

The protein resides in the secreted. It localises to the cell wall. In terms of biological role, may contribute to cell wall structure in root hairs. The chain is Proline-rich protein 3 (PRP3) from Arabidopsis thaliana (Mouse-ear cress).